The chain runs to 321 residues: AA9 family lytic polysaccharide monooxygenase D (321 aa).

A signal peptide spans 1–21 (MRSTIVATFAAGLVVASLVAA). Histidine 22 lines the Cu(2+) pocket. Disulfide bonds link cysteine 75/cysteine 192 and cysteine 116/cysteine 120. The N-linked (GlcNAc...) asparagine glycan is linked to asparagine 78. Histidine 105 contacts Cu(2+). N-linked (GlcNAc...) asparagine glycosylation occurs at asparagine 152. Residues histidine 178 and glutamine 187 each contribute to the O2 site. Tyrosine 189 serves as a coordination point for Cu(2+). Asparagine 266 is a glycosylation site (N-linked (GlcNAc...) asparagine).

The protein belongs to the polysaccharide monooxygenase AA9 family. The cofactor is Cu(2+).

It localises to the secreted. It carries out the reaction [(1-&gt;4)-beta-D-glucosyl]n+m + reduced acceptor + O2 = 4-dehydro-beta-D-glucosyl-[(1-&gt;4)-beta-D-glucosyl]n-1 + [(1-&gt;4)-beta-D-glucosyl]m + acceptor + H2O.. Its function is as follows. Lytic polysaccharide monooxygenase (LPMO) that depolymerizes crystalline and amorphous polysaccharides via the oxidation of scissile alpha- or beta-(1-4)-glycosidic bonds, yielding C1 or C4 oxidation products. Catalysis by LPMOs requires the reduction of the active-site copper from Cu(II) to Cu(I) by a reducing agent and H(2)O(2) or O(2) as a cosubstrate. The chain is AA9 family lytic polysaccharide monooxygenase D from Geotrichum candidum (Oospora lactis).